A 197-amino-acid polypeptide reads, in one-letter code: Holliday junction branch migration complex subunit RuvA (197 aa).

The interval 1–64 (MYEYIKGTYM…EDFIGLYGFG (64 aa)) is domain I. Positions 65 to 143 (SKEELELFNK…VNLDEGIQTD (79 aa)) are domain II. Residues 144 to 149 (SNDIKV) form a flexible linker region. The segment at 149-197 (VSSKILEEAKEALMSLGYSEKECEKALKNVEEKESLEIIIKESLKFLMN) is domain III.

This sequence belongs to the RuvA family. Homotetramer. Forms an RuvA(8)-RuvB(12)-Holliday junction (HJ) complex. HJ DNA is sandwiched between 2 RuvA tetramers; dsDNA enters through RuvA and exits via RuvB. An RuvB hexamer assembles on each DNA strand where it exits the tetramer. Each RuvB hexamer is contacted by two RuvA subunits (via domain III) on 2 adjacent RuvB subunits; this complex drives branch migration. In the full resolvosome a probable DNA-RuvA(4)-RuvB(12)-RuvC(2) complex forms which resolves the HJ.

It is found in the cytoplasm. The RuvA-RuvB-RuvC complex processes Holliday junction (HJ) DNA during genetic recombination and DNA repair, while the RuvA-RuvB complex plays an important role in the rescue of blocked DNA replication forks via replication fork reversal (RFR). RuvA specifically binds to HJ cruciform DNA, conferring on it an open structure. The RuvB hexamer acts as an ATP-dependent pump, pulling dsDNA into and through the RuvAB complex. HJ branch migration allows RuvC to scan DNA until it finds its consensus sequence, where it cleaves and resolves the cruciform DNA. This Hathewaya histolytica (Clostridium histolyticum) protein is Holliday junction branch migration complex subunit RuvA.